The primary structure comprises 733 residues: Tyrosine-protein kinase ptk (733 aa).

Helical transmembrane passes span 19–39 and 438–458; these read LFFS…LSLI and LQIL…LALL. ATP is bound at residue 542 to 550; sequence GPAPEVGKS.

The protein belongs to the etk/wzc family. The cofactor is Mg(2+). Mn(2+) serves as cofactor. Post-translationally, autophosphorylated on several Tyr residues. Dephosphorylated by ptp.

Its subcellular location is the cell inner membrane. It carries out the reaction L-tyrosyl-[protein] + ATP = O-phospho-L-tyrosyl-[protein] + ADP + H(+). It participates in glycan metabolism; exopolysaccharide biosynthesis. Its function is as follows. May be involved in the production and the transport of exopolysaccharides. This Acinetobacter johnsonii protein is Tyrosine-protein kinase ptk (ptk).